A 162-amino-acid polypeptide reads, in one-letter code: Nitrogen regulatory protein (162 aa).

Residues 12-156 (NVLNQECTRS…EELYEIITEA (145 aa)) enclose the PTS EIIA type-2 domain. The active-site Tele-phosphohistidine intermediate is histidine 73.

The protein localises to the cytoplasm. Seems to have a role in regulating nitrogen assimilation. The polypeptide is Nitrogen regulatory protein (ptsN) (Klebsiella oxytoca).